The following is a 360-amino-acid chain: Protein Wnt-2 (360 aa).

Residues 1-26 form the signal peptide; the sequence is MNSSSLFGIWLSVPLILSWVTPQVSS. 11 cysteine pairs are disulfide-bonded: Cys-76–Cys-87, Cys-127–Cys-135, Cys-137–Cys-157, Cys-206–Cys-220, Cys-208–Cys-215, Cys-278–Cys-309, Cys-294–Cys-304, Cys-308–Cys-348, Cys-324–Cys-339, Cys-326–Cys-336, and Cys-331–Cys-332. Ser-212 carries the O-palmitoleoyl serine; by PORCN lipid modification. An N-linked (GlcNAc...) asparagine glycan is attached at Asn-295.

The protein belongs to the Wnt family. Palmitoleoylation is required for efficient binding to frizzled receptors. Depalmitoleoylation leads to Wnt signaling pathway inhibition.

Its subcellular location is the secreted. It localises to the extracellular space. It is found in the extracellular matrix. Ligand for members of the frizzled family of seven transmembrane receptors. Functions in the canonical Wnt signaling pathway that results in activation of transcription factors of the TCF/LEF family. Functions as a upstream regulator of FGF10 expression. Plays an important role in embryonic lung development. May contribute to embryonic brain development by regulating the proliferation of dopaminergic precursors and neurons. The chain is Protein Wnt-2 (WNT2) from Monodelphis domestica (Gray short-tailed opossum).